Consider the following 233-residue polypeptide: Large ribosomal subunit protein uL1 (233 aa).

The protein belongs to the universal ribosomal protein uL1 family. In terms of assembly, part of the 50S ribosomal subunit.

Binds directly to 23S rRNA. The L1 stalk is quite mobile in the ribosome, and is involved in E site tRNA release. In terms of biological role, protein L1 is also a translational repressor protein, it controls the translation of the L11 operon by binding to its mRNA. In Thermotoga sp. (strain RQ2), this protein is Large ribosomal subunit protein uL1.